A 177-amino-acid polypeptide reads, in one-letter code: Large ribosomal subunit protein uL6 (177 aa).

This sequence belongs to the universal ribosomal protein uL6 family. As to quaternary structure, part of the 50S ribosomal subunit.

Functionally, this protein binds to the 23S rRNA, and is important in its secondary structure. It is located near the subunit interface in the base of the L7/L12 stalk, and near the tRNA binding site of the peptidyltransferase center. The chain is Large ribosomal subunit protein uL6 from Rhodopseudomonas palustris (strain BisB18).